A 207-amino-acid chain; its full sequence is MTEAEQKAAFLGGLVVSFKEQMHTDVLVKPGEEAPPIPTHKAVLAARSKVFRNMLDSDECKTSPEESITLPDLSHDELKSLLEFLYSGNLKAPYNQYRSLYLAADKYDISYLQDVCRNHFIASLSSRNVLDILELASIPCDTILKDAAINHIVKHMEEVVVPMKYETFVQRNPDLSVEITRAYLRETKAKAKDHGAPLNGNTRPRIW.

A BTB domain is found at 24–94 (TDVLVKPGEE…LYSGNLKAPY (71 aa)).

As to quaternary structure, interacts with CUL3A.

Its pathway is protein modification; protein ubiquitination. Its function is as follows. May act as a substrate-specific adapter of an E3 ubiquitin-protein ligase complex (CUL3-RBX1-BTB) which mediates the ubiquitination and subsequent proteasomal degradation of target proteins. This Arabidopsis thaliana (Mouse-ear cress) protein is BTB/POZ domain-containing protein At1g01640.